A 534-amino-acid chain; its full sequence is NAD(P)H-quinone oxidoreductase chain 4 2 (534 aa).

A run of 13 helical transmembrane segments spans residues 6-26 (FPWLTTIILLPIVAALFIPLL), 38-58 (WYSLIVGLVDFILLVVAFWTS), 93-113 (LILLTGFISTLAMLAAWPVTF), 117-137 (FFYFLMLAMYGGQILVFAVQD), 138-158 (LLVFFFAWELELIPVYLLLAI), 171-191 (FILYTAGSSLFILVASLAMAF), 210-230 (IGFQLLLYAGFLIAYGVKLPI), 245-265 (TAPVHMLLAGILLKMGGYALF), 279-299 (FAPILVLLGVVNILYAALTSF), 313-333 (ISHMGFVLIGLGSFTQLGLSG), 335-355 (MLQMVSHGLIGASLFFLVGAT), 377-399 (MFAMWTTCAMASLALPGMSGFVA), and 419-439 (VVVISLAAIGVILTPIYLLSM).

Belongs to the complex I subunit 4 family.

The protein localises to the cellular thylakoid membrane. The enzyme catalyses a plastoquinone + NADH + (n+1) H(+)(in) = a plastoquinol + NAD(+) + n H(+)(out). It carries out the reaction a plastoquinone + NADPH + (n+1) H(+)(in) = a plastoquinol + NADP(+) + n H(+)(out). In terms of biological role, NDH-1 shuttles electrons from NAD(P)H, via FMN and iron-sulfur (Fe-S) centers, to quinones in the respiratory chain. The immediate electron acceptor for the enzyme in this species is believed to be plastoquinone. Couples the redox reaction to proton translocation (for every two electrons transferred, four hydrogen ions are translocated across the cytoplasmic membrane), and thus conserves the redox energy in a proton gradient. The sequence is that of NAD(P)H-quinone oxidoreductase chain 4 2 from Synechococcus elongatus (strain ATCC 33912 / PCC 7942 / FACHB-805) (Anacystis nidulans R2).